The following is a 340-amino-acid chain: Phosphoribosylformylglycinamidine cyclo-ligase (340 aa).

This sequence belongs to the AIR synthase family.

It is found in the cytoplasm. It carries out the reaction 2-formamido-N(1)-(5-O-phospho-beta-D-ribosyl)acetamidine + ATP = 5-amino-1-(5-phospho-beta-D-ribosyl)imidazole + ADP + phosphate + H(+). The protein operates within purine metabolism; IMP biosynthesis via de novo pathway; 5-amino-1-(5-phospho-D-ribosyl)imidazole from N(2)-formyl-N(1)-(5-phospho-D-ribosyl)glycinamide: step 2/2. The protein is Phosphoribosylformylglycinamidine cyclo-ligase of Streptococcus pneumoniae (strain Taiwan19F-14).